Here is a 1125-residue protein sequence, read N- to C-terminus: ATP-dependent DNA helicase Hel308 (1125 aa).

A Q motif motif is present at residues 1 to 29; the sequence is MKVDELPIDERIKRVIKERGIEELYPPQA. ATP contacts are provided by residues Gln-28 and 46–53; that span reads IPTASGKT. A Helicase ATP-binding domain is found at 33–197; the sequence is KSGVLEGKNL…WLDASLVVSD (165 aa). The short motif at 145–148 is the DEAH box element; that stretch reads DEVH. The region spanning 226–440 is the Helicase C-terminal domain; that stretch reads NWESLVLDAV…ELKERLESET (215 aa). Residues 500–640 enclose the DOD-type homing endonuclease domain; that stretch reads LIGLWIAEGS…LQLLVASLGY (141 aa).

This sequence belongs to the helicase family. Hel308 subfamily. As to quaternary structure, monomer. This protein undergoes a protein self splicing that involves a post-translational excision of the intervening region (intein) followed by peptide ligation.

The enzyme catalyses Couples ATP hydrolysis with the unwinding of duplex DNA by translocating in the 3'-5' direction.. It catalyses the reaction ATP + H2O = ADP + phosphate + H(+). Functionally, DNA-dependent ATPase and 3'-5' DNA helicase that may be involved in repair of stalled replication forks. The chain is ATP-dependent DNA helicase Hel308 from Thermococcus kodakarensis (strain ATCC BAA-918 / JCM 12380 / KOD1) (Pyrococcus kodakaraensis (strain KOD1)).